The sequence spans 420 residues: Serine--tRNA ligase (420 aa).

229 to 231 (TAE) is a binding site for L-serine. Residue 260-262 (RAE) participates in ATP binding. Glutamate 283 is a binding site for L-serine. 347–350 (EISS) contributes to the ATP binding site. Serine 382 is an L-serine binding site.

This sequence belongs to the class-II aminoacyl-tRNA synthetase family. Type-1 seryl-tRNA synthetase subfamily. Homodimer. The tRNA molecule binds across the dimer.

The protein localises to the cytoplasm. It catalyses the reaction tRNA(Ser) + L-serine + ATP = L-seryl-tRNA(Ser) + AMP + diphosphate + H(+). The enzyme catalyses tRNA(Sec) + L-serine + ATP = L-seryl-tRNA(Sec) + AMP + diphosphate + H(+). The protein operates within aminoacyl-tRNA biosynthesis; selenocysteinyl-tRNA(Sec) biosynthesis; L-seryl-tRNA(Sec) from L-serine and tRNA(Sec): step 1/1. Its function is as follows. Catalyzes the attachment of serine to tRNA(Ser). Is also able to aminoacylate tRNA(Sec) with serine, to form the misacylated tRNA L-seryl-tRNA(Sec), which will be further converted into selenocysteinyl-tRNA(Sec). The protein is Serine--tRNA ligase of Caldicellulosiruptor bescii (strain ATCC BAA-1888 / DSM 6725 / KCTC 15123 / Z-1320) (Anaerocellum thermophilum).